Reading from the N-terminus, the 79-residue chain is uncharacterized protein (79 aa).

Belongs to the BolA/IbaG family.

This is an uncharacterized protein from Buchnera aphidicola subsp. Baizongia pistaciae (strain Bp).